Reading from the N-terminus, the 64-residue chain is Disintegrin VLO5A (64 aa).

One can recognise a Disintegrin domain in the interval 1-64 (NSGNPCCDPV…SDCPRNPYKD (64 aa)). Disulfide bonds link cysteine 6/cysteine 29, cysteine 20/cysteine 26, cysteine 25/cysteine 50, and cysteine 38/cysteine 57. A Cell attachment site; atypical (VGD) motif is present at residues 42–44 (VGD).

The protein belongs to the venom metalloproteinase (M12B) family. P-II subfamily. P-IIe sub-subfamily. As to quaternary structure, heterodimer with VLO5B; disulfide-linked. As to expression, expressed by the venom gland.

Its subcellular location is the secreted. Functionally, poor inhibitor of platelet aggregation. The disintegrin inhibits the adhesion of the alpha-4/beta-1 (ITGA4/ITGB1) integrin to VCAM-1. Inhibition on alpha-IIb/beta-3 (ITGA2B/ITGB3) is low. This Macrovipera lebetina obtusa (Levant blunt-nosed viper) protein is Disintegrin VLO5A.